The primary structure comprises 396 residues: MNCEREQLRGNQEAAAAPDTMAQPYASAQFAPPQNGIPAEYTAPHPHPAPEYTGQTTVPDHTLNLYPPTQTHSEQSADTSAQTVSGTATQTDDAAPTDGQPQTQPSENTESKSQPKRLHVSNIPFRFRDPDLRQMFGQFGKILDVEIIFNERGSKGFGFVTFENSADADRAREKLHGTVVEGRKIEVNNATARVMTNKKTVNPYTNGWKLNPVVGAVYSPDFYAGTVLLCQANQEGSSMYSGPSSLVYTSAMPGFPYPAATAAAAYRGAHLRGRGRTVYNTFRAAAPPPPIPAYGGVVYQDGFYGADIYGGYAAYRYAQPTPATAAAYSDSYGRVYAADPYHHTLAPAPTYGVGAMNAFAPLTDAKTRSHADDVGLVLSSLQASIYRGGYNRFAPY.

The tract at residues 1-119 (MNCEREQLRG…ESKSQPKRLH (119 aa)) is disordered. The segment covering 67 to 86 (PPTQTHSEQSADTSAQTVSG) has biased composition (polar residues). Residues 87–98 (TATQTDDAAPTD) are compositionally biased toward low complexity. Residues 99-112 (GQPQTQPSENTESK) are compositionally biased toward polar residues. In terms of domain architecture, RRM spans 116 to 192 (KRLHVSNIPF…RKIEVNNATA (77 aa)). 2 positions are modified to asymmetric dimethylarginine: Arg316 and Ala337. An Omega-N-methylarginine modification is found at Arg387.

In terms of assembly, binds to the C-terminus of ATXN2. In terms of tissue distribution, detected in brain (at protein level). Detected in heart, brain, neurons, skeletal muscle and embryo.

Its subcellular location is the nucleus. It localises to the cytoplasm. Its function is as follows. RNA-binding protein that regulates alternative splicing events by binding to 5'-UGCAUGU-3' elements. Prevents binding of U2AF2 to the 3'-splice site. Regulates alternative splicing of tissue-specific exons and of differentially spliced exons during erythropoiesis. The protein is RNA binding protein fox-1 homolog 1 (Rbfox1) of Mus musculus (Mouse).